A 70-amino-acid polypeptide reads, in one-letter code: Ubiquinol-cytochrome c reductase complex assembly factor 5 (70 aa).

The Mitochondrial matrix segment spans residues 1 to 19 (MFTRAQVRRILQRVPGKQR). A helical transmembrane segment spans residues 20–41 (FGIYRFLPFFFVLGGTMEWIMI). Over 42–70 (KVRVGQETFYDVYRRKASERQYQRRLEDE) the chain is Mitochondrial intermembrane.

This sequence belongs to the UQCC5 family. As to quaternary structure, associates with the mitochondrial ribosome. Interacts with UQCC6. Interacts with MT-CYB; interacts with newly synthesizes MT-CYB. Forms a complex, named COMB/coordinator of mitochondrial CYTB biogenesis, composed of UQCC1, UQCC2, UQCC4, UQCC5 and UQCC6; regulates MT-CYB synthesis and promotes its membrane insertion.

The protein resides in the mitochondrion inner membrane. Functionally, required for the assembly and stability of the mitochondrial ubiquinol-cytochrome c reductase complex (complex III (CIII) or cytochrome b-c1 complex), a multisubunit transmembrane complex that is part of the mitochondrial electron transport chain (ETC) which drives oxidative phosphorylation. Mediates early complex III biogenesis. Participates in regulating the levels of electron transport chain proteins, and therefore energy supply, in response to changes in energy demand. Also involved in the first steps of cytochrome c oxidase complex (complex IV) assembly. The polypeptide is Ubiquinol-cytochrome c reductase complex assembly factor 5 (Homo sapiens (Human)).